The primary structure comprises 172 residues: Large ribosomal subunit protein uL10 (172 aa).

It belongs to the universal ribosomal protein uL10 family. Part of the ribosomal stalk of the 50S ribosomal subunit. The N-terminus interacts with L11 and the large rRNA to form the base of the stalk. The C-terminus forms an elongated spine to which L12 dimers bind in a sequential fashion forming a multimeric L10(L12)X complex.

Forms part of the ribosomal stalk, playing a central role in the interaction of the ribosome with GTP-bound translation factors. This is Large ribosomal subunit protein uL10 from Francisella philomiragia subsp. philomiragia (strain ATCC 25017 / CCUG 19701 / FSC 153 / O#319-036).